A 282-amino-acid chain; its full sequence is Farnesyl diphosphate synthase (282 aa).

Isopentenyl diphosphate contacts are provided by lysine 45, arginine 48, and histidine 77. Mg(2+) contacts are provided by aspartate 84 and aspartate 90. Arginine 95 lines the (2E)-geranyl diphosphate pocket. Arginine 96 provides a ligand contact to isopentenyl diphosphate. (2E)-geranyl diphosphate-binding residues include lysine 181, threonine 182, and glutamine 220.

Belongs to the FPP/GGPP synthase family. The cofactor is Mg(2+).

The protein resides in the cytoplasm. It carries out the reaction isopentenyl diphosphate + (2E)-geranyl diphosphate = (2E,6E)-farnesyl diphosphate + diphosphate. This Buchnera aphidicola subsp. Acyrthosiphon pisum (strain APS) (Acyrthosiphon pisum symbiotic bacterium) protein is Farnesyl diphosphate synthase (ispA).